The chain runs to 183 residues: Threonylcarbamoyl-AMP synthase (183 aa).

The YrdC-like domain occupies 1-183 (MNIQQIVEQL…LFTHQLFRQG (183 aa)).

This sequence belongs to the SUA5 family. TsaC subfamily.

The protein localises to the cytoplasm. The enzyme catalyses L-threonine + hydrogencarbonate + ATP = L-threonylcarbamoyladenylate + diphosphate + H2O. Required for the formation of a threonylcarbamoyl group on adenosine at position 37 (t(6)A37) in tRNAs that read codons beginning with adenine. Catalyzes the conversion of L-threonine, HCO(3)(-)/CO(2) and ATP to give threonylcarbamoyl-AMP (TC-AMP) as the acyladenylate intermediate, with the release of diphosphate. The chain is Threonylcarbamoyl-AMP synthase from Pasteurella multocida (strain Pm70).